The following is a 123-amino-acid chain: Large ribosomal subunit protein bL12 (123 aa).

The protein belongs to the bacterial ribosomal protein bL12 family. In terms of assembly, homodimer. Part of the ribosomal stalk of the 50S ribosomal subunit. Forms a multimeric L10(L12)X complex, where L10 forms an elongated spine to which 2 to 4 L12 dimers bind in a sequential fashion. Binds GTP-bound translation factors.

Forms part of the ribosomal stalk which helps the ribosome interact with GTP-bound translation factors. Is thus essential for accurate translation. The chain is Large ribosomal subunit protein bL12 from Geobacillus kaustophilus (strain HTA426).